The following is a 632-amino-acid chain: PTS system mannitol-specific EIICBA component (632 aa).

Residues 12-341 enclose the PTS EIIC type-2 domain; that stretch reads FGRFLSNMIM…ILLKYDFNTI (330 aa). The next 6 membrane-spanning stretches (helical) occupy residues 24–45, 50–70, 134–155, 165–185, 273–292, and 313–334; these read ISIF…WQPN, QLIS…TGGS, SLAI…PFIE, IQII…EPAK, LILG…GGLI, and FSNI…SILL. The PTS EIIB type-2 domain occupies 374 to 469; sequence KTIIVACDAG…KLVENMVFLY (96 aa). C380 serves as the catalytic Phosphocysteine intermediate; for EIIB activity. C380 is modified (phosphocysteine; by EIIA). The PTS EIIA type-2 domain maps to 488–630; the sequence is FQLNEENIIL…KEALSLLTME (143 aa). H548 (tele-phosphohistidine intermediate; for EIIA activity) is an active-site residue. H548 carries the phosphohistidine; by HPr modification.

In terms of assembly, homodimer. In terms of processing, an intramolecular phosphotransfer takes places between His-548 and Cys-380.

Its subcellular location is the cell inner membrane. The catalysed reaction is D-mannitol(out) + N(pros)-phospho-L-histidyl-[protein] = D-mannitol 1-phosphate(in) + L-histidyl-[protein]. The phosphoenolpyruvate-dependent sugar phosphotransferase system (sugar PTS), a major carbohydrate active transport system, catalyzes the phosphorylation of incoming sugar substrates concomitantly with their translocation across the cell membrane. This system is involved in D-mannitol transport. This is PTS system mannitol-specific EIICBA component (mtlA) from Buchnera aphidicola subsp. Acyrthosiphon pisum (strain APS) (Acyrthosiphon pisum symbiotic bacterium).